Reading from the N-terminus, the 30-residue chain is Phospholemman-like protein (30 aa).

Belongs to the FXYD family. In terms of processing, phosphorylated by protein kinase a (PK-A) and protein kinase C (PK-C). Phosphorylated in response to insulin and adrenergic stimulation.

The protein resides in the microsome membrane. The protein localises to the endoplasmic reticulum membrane. In terms of biological role, induces a hyperpolarization-activated chloride current when expressed in Xenopus oocytes. May have a functional role in muscle contraction. This is Phospholemman-like protein from Squalus acanthias (Spiny dogfish).